The chain runs to 152 residues: Ribosome maturation factor RimP (152 aa).

It belongs to the RimP family.

It is found in the cytoplasm. In terms of biological role, required for maturation of 30S ribosomal subunits. The chain is Ribosome maturation factor RimP from Aeromonas salmonicida (strain A449).